Consider the following 433-residue polypeptide: uncharacterized protein (433 aa).

Belongs to the arrestin family.

This is an uncharacterized protein from Schizosaccharomyces pombe (strain 972 / ATCC 24843) (Fission yeast).